Reading from the N-terminus, the 297-residue chain is GTPase Era (297 aa).

Residues 7-174 (RSGFVSIIGR…VEVVHGFIPA (168 aa)) enclose the Era-type G domain. The segment at 15-22 (GRPNVGKS) is G1. Residue 15-22 (GRPNVGKS) coordinates GTP. The segment at 41-45 (QTTRN) is G2. A G3 region spans residues 62–65 (DTPG). GTP contacts are provided by residues 62–66 (DTPGI) and 124–127 (NKID). The segment at 124-127 (NKID) is G4. Positions 153–155 (VSA) are G5. A KH type-2 domain is found at 205–282 (THDEVPYSVA…FLELFVRVSK (78 aa)).

It belongs to the TRAFAC class TrmE-Era-EngA-EngB-Septin-like GTPase superfamily. Era GTPase family. As to quaternary structure, monomer.

The protein localises to the cytoplasm. It is found in the cell inner membrane. An essential GTPase that binds both GDP and GTP, with rapid nucleotide exchange. Plays a role in 16S rRNA processing and 30S ribosomal subunit biogenesis and possibly also in cell cycle regulation and energy metabolism. The sequence is that of GTPase Era from Geotalea uraniireducens (strain Rf4) (Geobacter uraniireducens).